The primary structure comprises 340 residues: Tetraacyldisaccharide 4'-kinase (340 aa).

51–58 (HMGGAGKT) is a binding site for ATP.

It belongs to the LpxK family.

It carries out the reaction a lipid A disaccharide + ATP = a lipid IVA + ADP + H(+). Its pathway is glycolipid biosynthesis; lipid IV(A) biosynthesis; lipid IV(A) from (3R)-3-hydroxytetradecanoyl-[acyl-carrier-protein] and UDP-N-acetyl-alpha-D-glucosamine: step 6/6. Functionally, transfers the gamma-phosphate of ATP to the 4'-position of a tetraacyldisaccharide 1-phosphate intermediate (termed DS-1-P) to form tetraacyldisaccharide 1,4'-bis-phosphate (lipid IVA). This chain is Tetraacyldisaccharide 4'-kinase, found in Rhodopseudomonas palustris (strain ATCC BAA-98 / CGA009).